We begin with the raw amino-acid sequence, 357 residues long: 4-hydroxy-2-oxovalerate aldolase (357 aa).

Residues 1–21 (MSQEAARDAAAGRPVQIHDPT) are disordered. The 251-residue stretch at 15–265 (VQIHDPTLRD…RTGIDLYRLL (251 aa)) folds into the Pyruvate carboxyltransferase domain. 23 to 24 (RD) lines the substrate pocket. Asp24 is a binding site for Mn(2+). The active-site Proton acceptor is the His27. Ser177 and His204 together coordinate substrate. Mn(2+)-binding residues include His204 and His206.

The protein belongs to the 4-hydroxy-2-oxovalerate aldolase family.

It catalyses the reaction (S)-4-hydroxy-2-oxopentanoate = acetaldehyde + pyruvate. Its function is as follows. Involved in the biosynthesis of the peptidyl nucleoside antibiotic nikkomycin. The chain is 4-hydroxy-2-oxovalerate aldolase from Streptomyces tendae.